Consider the following 147-residue polypeptide: Protein phosphatase 1 regulatory subunit 14B (147 aa).

The span at 1 to 15 (MADSGPAGGAALAAP) shows a compositional bias: low complexity. Residues 1 to 55 (MADSGPAGGAALAAPAPGPGSGSTGPRVYFQSPPGAAGEGPGGADDDGPVRRQGK) are disordered. An N-acetylalanine modification is found at alanine 2. Residue serine 21 is modified to Phosphoserine. Tyrosine 29 is subject to Phosphotyrosine. Phosphoserine is present on serine 32. A Phosphothreonine modification is found at threonine 57. Positions 61 to 103 (DRKELRKRLNLEEWILEQLTRLYDCQEEEIPELEIDVDELLDM) form a coiled coil.

Belongs to the PP1 inhibitor family. Phosphorylated primarily on Thr-57 by PKC (in vitro). An unknown Ser is also phosphorylated by PKC (in vitro). Ubiquitous. Highly expressed in testis. Detected at low levels in the other tissues tested. Highly expressed in cardiac muscle, bladder and aorta (at protein level).

The protein resides in the cytoplasm. In terms of biological role, inhibitor of PPP1CA. Has over 50-fold higher inhibitory activity when phosphorylated. This chain is Protein phosphatase 1 regulatory subunit 14B (Ppp1r14b), found in Mus musculus (Mouse).